We begin with the raw amino-acid sequence, 646 residues long: MQPAALLGLLGATVVAAVSSMPVDIRNHNEEVVTHCIIEVLSNALLKSSAPPITPECRQVLKKNGKELKNEEKSENENTRFEVRLLRDPADTSEAPGLSSREDSGEGDAQVPTVADTESGGHSRERAGEPPGSQVAKEAKTRYSKSEGQNREEEMVKYQKRERGEVGSEERLSEGPGKAQTAFLNQRNQTPAKKEELVSRYDTQSARGLEKSHSRERSSQESGEETKSQENWPQELQRHPEGQEAPGESEEDASPEVDKRHSRPRHHHGRSRPDRSSQEGNPPLEEESHVGTGNSDEEKARHPAHFRALEEGAEYGEEVRRHSAAQAPGDLQGARFGGRGRGEHQALRRPSEESLEQENKRHGLSPDLNMAQGYSEESEEERGPAPGPSYRARGGEAAAYSTLGQTDEKRFLGETHHRVQESQRDKARRRLPGELRNYLDYGEEKGEEAARGKWQPQGDPRDADENREEARLRGKQYAPHHITEKRLGELLNPFYDPSQWKSSRFERKDPMDDSFLEGEEENGLTLNEKNFFPEYNYDWWEKKPFEEDVNWGYEKRNPVPKLDLKRQYDRVAELDQLLHYRKKSAEFPDFYDSEEQMSPQHTAENEEEKAGQGVLTEEEEKELENLAAMDLELQKIAEKFSGTRRG.

The N-terminal stretch at 1-20 is a signal peptide; sequence MQPAALLGLLGATVVAAVSS. A disulfide bridge links cysteine 36 with cysteine 57. Basic and acidic residues predominate over residues 67 to 90; it reads ELKNEEKSENENTRFEVRLLRDPA. Residues 67-483 form a disordered region; sequence ELKNEEKSEN…GKQYAPHHIT (417 aa). Serine 74 bears the Phosphoserine mark. Threonine 79 and threonine 92 each carry phosphothreonine. Residues serine 93, serine 99, serine 100, and serine 104 each carry the phosphoserine modification. A glycan (O-linked (Xyl...) (chondroitin sulfate) serine) is linked at serine 93. Residue threonine 113 is glycosylated (O-linked (GalNAc...) threonine). Basic and acidic residues-rich tracts occupy residues 119 to 128 and 137 to 173; these read SGGHSRERAG and KEAKTRYSKSEGQNREEEMVKYQKRERGEVGSEERLS. A phosphoserine mark is found at serine 123, serine 146, and serine 168. The segment covering 182–191 has biased composition (polar residues); it reads AFLNQRNQTP. The O-linked (GalNAc...) threonine glycan is linked to threonine 190. The residue at position 205 (serine 205) is a Phosphoserine. Over residues 208–228 the composition is skewed to basic and acidic residues; that stretch reads GLEKSHSRERSSQESGEETKS. Residue serine 222 is glycosylated (O-linked (Xyl...) (chondroitin sulfate) serine). Residues 260–270 are compositionally biased toward basic residues; the sequence is RHSRPRHHHGR. A phosphoserine mark is found at serine 276, serine 277, and serine 295. Residue tyrosine 315 is modified to Sulfotyrosine. Residues 340-361 are compositionally biased toward basic and acidic residues; the sequence is GRGEHQALRRPSEESLEQENKR. Phosphoserine occurs at positions 351 and 354. Tyrosine 374 carries the post-translational modification Phosphotyrosine. Residues serine 375 and serine 378 each carry the phosphoserine modification. Residues 406–425 show a composition bias toward basic and acidic residues; that stretch reads TDEKRFLGETHHRVQESQRD. Tyrosine 441 carries the sulfotyrosine modification. 2 stretches are compositionally biased toward basic and acidic residues: residues 442-451 and 459-472; these read GEEKGEEAAR and DPRDADENREEARL. At glutamine 476 the chain carries Pyrrolidone carboxylic acid; in secretogranin-1(476-566). Serine 502, serine 503, and serine 514 each carry phosphoserine. Sulfotyrosine is present on tyrosine 535. The residue at position 567 (glutamine 567) is a Pyrrolidone carboxylic acid; in peptide BAM-1745. At serine 584 the chain carries Phosphoserine. Residues 588–620 form a disordered region; that stretch reads PDFYDSEEQMSPQHTAENEEEKAGQGVLTEEEE. Tyrosine 591 bears the Sulfotyrosine mark. Phosphoserine is present on residues serine 593 and serine 598. Glutamine 634 carries the pyrrolidone carboxylic acid; in Secretolytin; partial modification.

This sequence belongs to the chromogranin/secretogranin protein family. In terms of assembly, interacts with ITPR1 in the secretory granules. In terms of processing, O-glycosylated by the trisaccharide, GalNAc-Gal-NeuAc, on 2 sites in the N-terminal. May be glycated. Post-translationally, extensively phosphorylated. Differentially processed on numerous sites throughout the sequence depending on tissue type.

The protein resides in the cytoplasmic vesicle. The protein localises to the secretory vesicle membrane. Its subcellular location is the secreted. Its function is as follows. Secretogranin-1 is a neuroendocrine secretory granule protein, which may be the precursor for other biologically active peptides. The 16 pairs of basic AA distributed throughout its sequence may be used as proteolytic cleavage sites. Secretolytin has antibacterial activity. The polypeptide is Secretogranin-1 (CHGB) (Bos taurus (Bovine)).